We begin with the raw amino-acid sequence, 401 residues long: Acetate kinase (401 aa).

Asparagine 7 contributes to the Mg(2+) binding site. Residue lysine 14 participates in ATP binding. Arginine 91 contributes to the substrate binding site. Aspartate 148 (proton donor/acceptor) is an active-site residue. Residues 208–212 (HLGNG), 283–285 (DFR), and 332–336 (GVGEN) each bind ATP. Residue glutamate 385 participates in Mg(2+) binding.

Belongs to the acetokinase family. Homodimer. The cofactor is Mg(2+). It depends on Mn(2+) as a cofactor.

The protein localises to the cytoplasm. It carries out the reaction acetate + ATP = acetyl phosphate + ADP. It participates in metabolic intermediate biosynthesis; acetyl-CoA biosynthesis; acetyl-CoA from acetate: step 1/2. In terms of biological role, catalyzes the formation of acetyl phosphate from acetate and ATP. Can also catalyze the reverse reaction. This Caldanaerobacter subterraneus subsp. tengcongensis (strain DSM 15242 / JCM 11007 / NBRC 100824 / MB4) (Thermoanaerobacter tengcongensis) protein is Acetate kinase.